The sequence spans 319 residues: Methionyl-tRNA formyltransferase (319 aa).

112 to 115 (SLLP) contacts (6S)-5,6,7,8-tetrahydrofolate.

This sequence belongs to the Fmt family.

It carries out the reaction L-methionyl-tRNA(fMet) + (6R)-10-formyltetrahydrofolate = N-formyl-L-methionyl-tRNA(fMet) + (6S)-5,6,7,8-tetrahydrofolate + H(+). In terms of biological role, attaches a formyl group to the free amino group of methionyl-tRNA(fMet). The formyl group appears to play a dual role in the initiator identity of N-formylmethionyl-tRNA by promoting its recognition by IF2 and preventing the misappropriation of this tRNA by the elongation apparatus. In Pelobacter propionicus (strain DSM 2379 / NBRC 103807 / OttBd1), this protein is Methionyl-tRNA formyltransferase.